Reading from the N-terminus, the 553-residue chain is Zinc finger protein 426 (553 aa).

The KRAB domain occupies 40–111; that stretch reads VSFDDVIVDF…KIVFPEWKIQ (72 aa). 11 consecutive C2H2-type zinc fingers follow at residues 222–244, 277–299, 305–327, 333–355, 361–383, 389–411, 417–439, 445–467, 473–495, 501–525, and 531–553; these read FECS…QRTH, HRCK…MRTH, YECK…GRTH, YVCN…VRSH, YACK…IRTH, FVCV…LKMH, CECK…MRTH, YTCK…MRIH, YECK…ERTH, YECK…SHTH, and YKCQ…ERIH.

It is found in the nucleus. Its function is as follows. May be involved in transcriptional regulation. In Rattus norvegicus (Rat), this protein is Zinc finger protein 426 (Znf426).